Consider the following 860-residue polypeptide: MQEQYRPEDIETQVQLHWQEKQTFKVTEDASKEKYYCLSMLPYPSGRLHMGHVRNYTIGDVISRYQRMLGKNVLQPIGWDAFGLPAEGAAVKNNTAPAPWTYDNIEYMKNQLKLLGFGYDWDREIATCKPDYYRWEQWFFTKLYEKGMVYKKTSAVNWCPHDLTVLANEQVIDGCCWRCDTKVERKEIPQWFIKITDYAEQLLNDLDTLESWPEQVKTMQRNWIGRSEGVDIIFDVVDSEEKLSVYTTRPDTFMGVTYVAVAAGHPLSLQAAATNPALADFVAECRNTKVAEAEMATMEKKGMATGLYAIHPLTGEKLPIWAANFVLMDYGTGAVMAVPGHDARDWEFATKYNLPIKPVILAADGSEPDLSQEAMTEKGTLFNSGEFDGLNHEDGFNAIADKLVALGVGQRKVNYRLRDWGVSRQRYWGAPIPMVTLEDGTVVPTPEDQLPVILPEDVVMDGISSPIKADPEWAKTTVNGIPGLRETDTFDTFMESSWYYARYTCPQYDDGMLDPAAANYWLPVDQYVGGIEHAIMHLMYFRFFHKLLRDAGLVDSDEPAKRLLCQGMVLADAFYYTGNNGERIWVSPVDAIVERDDKGRIVKAVDAEGHELVYAGMSKMSKSKNNGIDPQVMVEKYGADTVRLFMMFASPAEMTLEWQESGVEGANRFLKRVWRLAFDHTAKGAVKPLDIASLTEEQKSLRRDLHKTIAKVTDDVGRRQTFNTAIAAVMELMNKLGRAPQETEQDRALMQEALLAVVRMLYPFTPHVCFSLWQALGGEGDIDTAPWPIADEQAMVEDSKLVVVQVNGKVRGRITVPADATEQQVRERAGQEHLVAKYLDGVTVRKVIYVPGKLLNLVVG.

The 'HIGH' region signature appears at 42–52 (PYPSGRLHMGH). The 'KMSKS' region motif lies at 619–623 (KMSKS). Lysine 622 is an ATP binding site.

It belongs to the class-I aminoacyl-tRNA synthetase family.

The protein resides in the cytoplasm. It carries out the reaction tRNA(Leu) + L-leucine + ATP = L-leucyl-tRNA(Leu) + AMP + diphosphate. In Yersinia pseudotuberculosis serotype O:3 (strain YPIII), this protein is Leucine--tRNA ligase.